Consider the following 218-residue polypeptide: Claudin-3 (218 aa).

Over 1–8 (MSMGLEIA) the chain is Cytoplasmic. A helical membrane pass occupies residues 9–29 (GTSLAVLGWLSTIVCCALPMW). The Extracellular portion of the chain corresponds to 30–80 (RVTAFIGSSIITAQITWEGLWMNCVVQSTGQMQCKVYDSLLALPQDLQAAR). The helical transmembrane segment at 81 to 101 (ALIVVSILLAAFGLLVALVGA) threads the bilayer. Topologically, residues 102 to 115 (QCTNCVQDDTAKAK) are cytoplasmic. The helical transmembrane segment at 116 to 136 (ITIVAGVLFLLAALLTLVPVS) threads the bilayer. The Extracellular portion of the chain corresponds to 137–159 (WSANTIIRDFYNPLVPDAQKREM). Residues 160–180 (GAGLYVGWAAAALQLLGGALL) form a helical membrane-spanning segment. Residues 181–218 (CCSCPPRDKKYAPTKIVYSAPRSAGPGTSTAYDRKDYV) are Cytoplasmic-facing. Residue tyrosine 198 is modified to Phosphotyrosine. Serine 199 and serine 209 each carry phosphoserine. The interactions with TJP1, TJP2 and TJP3 stretch occupies residues 217-218 (YV).

It belongs to the claudin family. Can form homo- and heteropolymers with other CLDN. Homopolymers interact with CLDN1 and CLDN2 homopolymers. Interacts in cis (within the same plasma membrane) with CLDN19. Directly interacts with TJP1/ZO-1, TJP2/ZO-2 and TJP3/ZO-3.

Its subcellular location is the cell junction. The protein localises to the tight junction. It is found in the cell membrane. In terms of biological role, plays a major role in tight junction-specific obliteration of the intercellular space, through calcium-independent cell-adhesion activity. The protein is Claudin-3 (CLDN3) of Canis lupus familiaris (Dog).